The following is a 760-amino-acid chain: UDP-N-acetylmuramoyl-L-alanyl-D-glutamate--2,6-diaminopimelate ligase MurE homolog, chloroplastic (760 aa).

The transit peptide at 1–59 (MATAPLAFRLPFPFSFPSASRPPPSRILAPPTPRRLPLRLAAAAARRFRPPTADDEPPE) directs the protein to the chloroplast. Disordered regions lie at residues 13–159 (PFSF…TDEL) and 176–205 (LSVV…DEDG). Over residues 20-34 (SRPPPSRILAPPTPR) the composition is skewed to pro residues. Residues 53–62 (ADDEPPEAAE) are compositionally biased toward acidic residues. The segment covering 118-132 (EIDRAIAEKREEFTR) has biased composition (basic and acidic residues). Composition is skewed to acidic residues over residues 150 to 159 (PEDEDLTDEL) and 182 to 205 (ADEE…DEDG).

This sequence belongs to the MurCDEF family. MurE subfamily. As to quaternary structure, component of the plastid-encoded plastid RNA polymerase (PEP) complex.

The protein localises to the plastid. It localises to the chloroplast. Its function is as follows. Required for the activity of the plastid-encoded RNA polymerase (PEP) and full expression of genes transcribed by PEP. Required for the proper build-up and formation of the PEP-complex. This chain is UDP-N-acetylmuramoyl-L-alanyl-D-glutamate--2,6-diaminopimelate ligase MurE homolog, chloroplastic, found in Zea mays (Maize).